Consider the following 208-residue polypeptide: Large ribosomal subunit protein bL25 (208 aa).

The tract at residues 184–208 (VTISGTSSDQDTSGGESSGTTTSED) is disordered. Residues 187–208 (SGTSSDQDTSGGESSGTTTSED) show a composition bias toward low complexity.

This sequence belongs to the bacterial ribosomal protein bL25 family. CTC subfamily. Part of the 50S ribosomal subunit; part of the 5S rRNA/L5/L18/L25 subcomplex. Contacts the 5S rRNA. Binds to the 5S rRNA independently of L5 and L18.

Its function is as follows. This is one of the proteins that binds to the 5S RNA in the ribosome where it forms part of the central protuberance. The protein is Large ribosomal subunit protein bL25 of Ehrlichia ruminantium (strain Gardel).